The sequence spans 547 residues: Methionine--tRNA ligase (547 aa).

Positions 15-25 match the 'HIGH' region motif; sequence PYANGSLHLGH. Residues C146, C149, C159, and C162 each coordinate Zn(2+). The 'KMSKS' region signature appears at 332–336; it reads KMSKS. K335 provides a ligand contact to ATP.

It belongs to the class-I aminoacyl-tRNA synthetase family. MetG type 1 subfamily. In terms of assembly, monomer. Zn(2+) serves as cofactor.

It localises to the cytoplasm. The enzyme catalyses tRNA(Met) + L-methionine + ATP = L-methionyl-tRNA(Met) + AMP + diphosphate. Its function is as follows. Is required not only for elongation of protein synthesis but also for the initiation of all mRNA translation through initiator tRNA(fMet) aminoacylation. The polypeptide is Methionine--tRNA ligase (Baumannia cicadellinicola subsp. Homalodisca coagulata).